The chain runs to 340 residues: Biotin synthase (340 aa).

Positions 56-283 (NAVQLSTLLS…KAVVRLSAGR (228 aa)) constitute a Radical SAM core domain. [4Fe-4S] cluster is bound by residues Cys71, Cys75, and Cys78. Positions 115, 146, 206, and 278 each coordinate [2Fe-2S] cluster.

The protein belongs to the radical SAM superfamily. Biotin synthase family. Homodimer. Requires [4Fe-4S] cluster as cofactor. The cofactor is [2Fe-2S] cluster.

It catalyses the reaction (4R,5S)-dethiobiotin + (sulfur carrier)-SH + 2 reduced [2Fe-2S]-[ferredoxin] + 2 S-adenosyl-L-methionine = (sulfur carrier)-H + biotin + 2 5'-deoxyadenosine + 2 L-methionine + 2 oxidized [2Fe-2S]-[ferredoxin]. It participates in cofactor biosynthesis; biotin biosynthesis; biotin from 7,8-diaminononanoate: step 2/2. In terms of biological role, catalyzes the conversion of dethiobiotin (DTB) to biotin by the insertion of a sulfur atom into dethiobiotin via a radical-based mechanism. The sequence is that of Biotin synthase from Burkholderia lata (strain ATCC 17760 / DSM 23089 / LMG 22485 / NCIMB 9086 / R18194 / 383).